The chain runs to 125 residues: Large ribosomal subunit protein bL21 (125 aa).

A compositionally biased stretch (basic residues) spans 75–89 (FKKRRRQNSKRKRGH). 2 disordered regions span residues 75–94 (FKKR…QDLT) and 103–125 (AGGA…APEA). The segment covering 106–125 (ASPAAAAASSETPAASAPEA) has biased composition (low complexity).

This sequence belongs to the bacterial ribosomal protein bL21 family. In terms of assembly, part of the 50S ribosomal subunit. Contacts protein L20.

In terms of biological role, this protein binds to 23S rRNA in the presence of protein L20. This is Large ribosomal subunit protein bL21 from Methylocella silvestris (strain DSM 15510 / CIP 108128 / LMG 27833 / NCIMB 13906 / BL2).